The following is a 108-amino-acid chain: UPF0235 protein Rpal_0418 (108 aa).

The protein belongs to the UPF0235 family.

The sequence is that of UPF0235 protein Rpal_0418 from Rhodopseudomonas palustris (strain TIE-1).